The sequence spans 368 residues: CCA-adding enzyme (368 aa).

The ATP site is built by Gly8 and Arg11. Residues Gly8 and Arg11 each contribute to the CTP site. Mg(2+) is bound by residues Asp21 and Asp23. Arg91, Arg137, and Arg140 together coordinate ATP. Residues Arg91, Arg137, and Arg140 each coordinate CTP.

Belongs to the tRNA nucleotidyltransferase/poly(A) polymerase family. Bacterial CCA-adding enzyme type 2 subfamily. Mg(2+) serves as cofactor.

The enzyme catalyses a tRNA precursor + 2 CTP + ATP = a tRNA with a 3' CCA end + 3 diphosphate. The catalysed reaction is a tRNA with a 3' CCA end + 2 CTP + ATP = a tRNA with a 3' CCACCA end + 3 diphosphate. Catalyzes the addition and repair of the essential 3'-terminal CCA sequence in tRNAs without using a nucleic acid template. Adds these three nucleotides in the order of C, C, and A to the tRNA nucleotide-73, using CTP and ATP as substrates and producing inorganic pyrophosphate. tRNA 3'-terminal CCA addition is required both for tRNA processing and repair. Also involved in tRNA surveillance by mediating tandem CCA addition to generate a CCACCA at the 3' terminus of unstable tRNAs. While stable tRNAs receive only 3'-terminal CCA, unstable tRNAs are marked with CCACCA and rapidly degraded. The chain is CCA-adding enzyme from Pseudomonas putida (strain ATCC 700007 / DSM 6899 / JCM 31910 / BCRC 17059 / LMG 24140 / F1).